Consider the following 122-residue polypeptide: UPF0145 protein BamMC406_5002 (122 aa).

It belongs to the UPF0145 family.

In Burkholderia ambifaria (strain MC40-6), this protein is UPF0145 protein BamMC406_5002.